Here is a 230-residue protein sequence, read N- to C-terminus: Response regulator MprA (230 aa).

In terms of domain architecture, Response regulatory spans 4–118 (RILVVDDDRA…ELLARMRALL (115 aa)). D48 carries the post-translational modification 4-aspartylphosphate. A DNA-binding region (ompR/PhoB-type) is located at residues 129-227 (SMAMRFSDLT…VRGVGYVLRE (99 aa)).

Phosphorylated and dephosphorylated by MprB.

Its subcellular location is the cytoplasm. Member of the two-component regulatory system MprB/MprA which contributes to maintaining a balance among several systems involved in stress resistance and is required for establishment and maintenance of persistent infection in the host. Functions as a transcriptional regulator that recognizes a 19-bp nucleotide motif comprizing two loosely conserved 8-bp direct DNA-binding motif repeats separated by a 3-bp spacer region. The chain is Response regulator MprA (mprA) from Mycobacterium tuberculosis (strain ATCC 25177 / H37Ra).